We begin with the raw amino-acid sequence, 201 residues long: Phosphoheptose isomerase 2 (201 aa).

In terms of domain architecture, SIS spans 39 to 198 (VIKAYKNGNK…EEELFGKGFS (160 aa)). 54–56 (NGG) contacts substrate. 2 residues coordinate Zn(2+): histidine 63 and glutamate 67. Substrate is bound by residues glutamate 67, 96–97 (ND), 122–124 (STS), serine 127, and glutamine 174. Glutamine 174 and histidine 182 together coordinate Zn(2+).

The protein belongs to the SIS family. GmhA subfamily. Homotetramer. Zn(2+) serves as cofactor.

It localises to the cytoplasm. It carries out the reaction 2 D-sedoheptulose 7-phosphate = D-glycero-alpha-D-manno-heptose 7-phosphate + D-glycero-beta-D-manno-heptose 7-phosphate. The protein operates within carbohydrate biosynthesis; D-glycero-D-manno-heptose 7-phosphate biosynthesis; D-glycero-alpha-D-manno-heptose 7-phosphate and D-glycero-beta-D-manno-heptose 7-phosphate from sedoheptulose 7-phosphate: step 1/1. Its pathway is capsule biogenesis; capsule polysaccharide biosynthesis. Catalyzes the isomerization of sedoheptulose 7-phosphate in D-glycero-D-manno-heptose 7-phosphate. No activity with L-galacto-heptulose, L-galacto-heptulose 7-phosphate or D-manno-heptulose. This Campylobacter jejuni subsp. jejuni serotype O:2 (strain ATCC 700819 / NCTC 11168) protein is Phosphoheptose isomerase 2.